The chain runs to 219 residues: Large ribosomal subunit protein uL3 (219 aa).

The tract at residues 133–153 is disordered; the sequence is GRASHGNSRSHNVPGSIGMAQ. Gln-153 is modified (N5-methylglutamine).

This sequence belongs to the universal ribosomal protein uL3 family. In terms of assembly, part of the 50S ribosomal subunit. Forms a cluster with proteins L14 and L19. Methylated by PrmB.

Functionally, one of the primary rRNA binding proteins, it binds directly near the 3'-end of the 23S rRNA, where it nucleates assembly of the 50S subunit. This chain is Large ribosomal subunit protein uL3, found in Burkholderia thailandensis (strain ATCC 700388 / DSM 13276 / CCUG 48851 / CIP 106301 / E264).